Here is a 155-residue protein sequence, read N- to C-terminus: Ribosome maturation factor RimP (155 aa).

It belongs to the RimP family.

The protein localises to the cytoplasm. Its function is as follows. Required for maturation of 30S ribosomal subunits. In Prochlorococcus marinus (strain SARG / CCMP1375 / SS120), this protein is Ribosome maturation factor RimP.